The primary structure comprises 76 residues: Protein TraJ (76 aa).

The protein resides in the cytoplasm. Functionally, this protein is essential for positively regulating the expression of transfer genes that are involved in the conjugal transfer of DNA between bacterial cells. This chain is Protein TraJ (traJ), found in Escherichia coli.